The following is a 154-amino-acid chain: Putative antiporter subunit mnhG2 (154 aa).

Transmembrane regions (helical) follow at residues 11 to 31 (IASI…IGIV), 51 to 71 (VLLT…FFSV), and 72 to 92 (RLLL…HLIS).

Belongs to the CPA3 antiporters (TC 2.A.63) subunit G family. May form a heterooligomeric complex that consists of seven subunits: mnhA2, mnhB2, mnhC2, mnhD2, mnhE2, mnhF2 and mnhG2.

The protein resides in the cell membrane. The protein is Putative antiporter subunit mnhG2 (mnhG2) of Staphylococcus epidermidis (strain ATCC 35984 / DSM 28319 / BCRC 17069 / CCUG 31568 / BM 3577 / RP62A).